Consider the following 286-residue polypeptide: ATP synthase gamma chain (286 aa).

This sequence belongs to the ATPase gamma chain family. In terms of assembly, F-type ATPases have 2 components, CF(1) - the catalytic core - and CF(0) - the membrane proton channel. CF(1) has five subunits: alpha(3), beta(3), gamma(1), delta(1), epsilon(1). CF(0) has three main subunits: a, b and c.

It is found in the cell inner membrane. Its function is as follows. Produces ATP from ADP in the presence of a proton gradient across the membrane. The gamma chain is believed to be important in regulating ATPase activity and the flow of protons through the CF(0) complex. This chain is ATP synthase gamma chain, found in Pseudomonas savastanoi pv. phaseolicola (strain 1448A / Race 6) (Pseudomonas syringae pv. phaseolicola (strain 1448A / Race 6)).